Consider the following 96-residue polypeptide: Small ribosomal subunit protein bS6 (96 aa).

This sequence belongs to the bacterial ribosomal protein bS6 family.

Functionally, binds together with bS18 to 16S ribosomal RNA. The chain is Small ribosomal subunit protein bS6 from Streptococcus mutans serotype c (strain ATCC 700610 / UA159).